Consider the following 37-residue polypeptide: Cytochrome b6-f complex subunit 5 (37 aa).

Residues 5–25 (ILLGIVLGMVVVTLAGLFVAA) form a helical membrane-spanning segment.

The protein belongs to the PetG family. In terms of assembly, the 4 large subunits of the cytochrome b6-f complex are cytochrome b6, subunit IV (17 kDa polypeptide, PetD), cytochrome f and the Rieske protein, while the 4 small subunits are PetG, PetL, PetM and PetN. The complex functions as a dimer.

It is found in the cellular thylakoid membrane. Its function is as follows. Component of the cytochrome b6-f complex, which mediates electron transfer between photosystem II (PSII) and photosystem I (PSI), cyclic electron flow around PSI, and state transitions. PetG is required for either the stability or assembly of the cytochrome b6-f complex. The polypeptide is Cytochrome b6-f complex subunit 5 (Synechococcus sp. (strain JA-2-3B'a(2-13)) (Cyanobacteria bacterium Yellowstone B-Prime)).